A 329-amino-acid chain; its full sequence is Prostaglandin reductase 1 (329 aa).

T18 carries the post-translational modification Phosphothreonine. A Phosphoserine modification is found at S20. NADP(+)-binding positions include 152–155, K178, Y193, N217, 239–245, 270–272, and N321; these read GAVG, CGAISVY, and FIV. K178 carries the post-translational modification N6-(2-hydroxyisobutyryl)lysine; alternate. An N6-acetyllysine; alternate modification is found at K178.

It belongs to the NADP-dependent oxidoreductase L4BD family. Monomer or homodimer. Detected in small intestine, kidney, liver, spleen and stomach (at protein level). Detected in small intestine, kidney and liver.

The protein localises to the cytoplasm. It carries out the reaction 13,14-dihydro-15-oxo-prostaglandin E1 + NADP(+) = 15-oxoprostaglandin E1 + NADPH + H(+). The enzyme catalyses 13,14-dihydro-15-oxo-prostaglandin E2 + NAD(+) = 15-oxoprostaglandin E2 + NADH + H(+). It catalyses the reaction 13,14-dihydro-15-oxo-prostaglandin F1alpha + NADP(+) = 15-oxoprostaglandin F1alpha + NADPH + H(+). The catalysed reaction is 13,14-dihydro-15-oxo-PGF2alpha + NADP(+) = 15-oxoprostaglandin F2alpha + NADPH + H(+). It carries out the reaction leukotriene B4 + NADP(+) = 12-oxo-leukotriene B4 + NADPH + H(+). The enzyme catalyses 20-hydroxy-leukotriene B4 + NADP(+) = 12-oxo-20-hydroxy-leukotriene B4 + NADPH + H(+). It catalyses the reaction 6-trans-leukotriene B4 + NADP(+) = 12-oxo-(5S)-hydroxy-(6E,8E,10E,14Z)-eicosatetraenoate + NADPH + H(+). The catalysed reaction is (5S,12S)-dihydroxy-(6E,10E,12E,14Z)-eicosatetraenoate + NADP(+) = 12-oxo-(5S)-hydroxy-(6E,8E,10E,14Z)-eicosatetraenoate + NADPH + H(+). It carries out the reaction an n-alkanal + NADP(+) = an alk-2-enal + NADPH + H(+). The enzyme catalyses hexanal + NADP(+) = (E)-hex-2-enal + NADPH + H(+). It catalyses the reaction octanal + NADP(+) = (2E)-octenal + NADPH + H(+). The catalysed reaction is decanal + NADP(+) = (2E)-decenal + NADPH + H(+). It carries out the reaction dodecanal + NADP(+) = (2E)-dodecenal + NADPH + H(+). The enzyme catalyses 4-hydroxynonanal + NADP(+) = (E)-4-hydroxynon-2-enal + NADPH + H(+). It catalyses the reaction pentan-2-one + NADP(+) = (E)-pent-3-en-2-one + NADPH + H(+). The catalysed reaction is nonan-2-one + NADP(+) = (3E)-nonen-2-one + NADPH + H(+). NAD(P)H-dependent oxidoreductase involved in metabolic inactivation of pro- and anti-inflammatory eicosanoids: prostaglandins (PG), leukotrienes (LT) and lipoxins (LX). Catalyzes with high efficiency the reduction of the 13,14 double bond of 15-oxoPGs, including 15-oxo-PGE1, 15-oxo-PGE2, 15-oxo-PGF1-alpha and 15-oxo-PGF2-alpha. Catalyzes with lower efficiency the oxidation of the hydroxyl group at C12 of LTB4 and its derivatives, converting them into biologically less active 12-oxo-LTB4 metabolites. Reduces 15-oxo-LXA4 to 13,14 dihydro-15-oxo-LXA4, enhancing neutrophil recruitment at the inflammatory site. Plays a role in metabolic detoxification of alkenals and ketones. Reduces alpha,beta-unsaturated alkenals and ketones, particularly those with medium-chain length, showing highest affinity toward (2E)-decenal and (3E)-3-nonen-2-one. May inactivate 4-hydroxy-2-nonenal, a cytotoxic lipid constituent of oxidized low-density lipoprotein particles. The polypeptide is Prostaglandin reductase 1 (Ptgr1) (Cavia porcellus (Guinea pig)).